Here is a 774-residue protein sequence, read N- to C-terminus: Shugoshin (774 aa).

The stretch at 41–105 (SLRIRGLENE…AELSSLLASL (65 aa)) forms a coiled coil. 3 disordered regions span residues 106–151 (GEPP…QEGR), 205–661 (SPSP…DAQL), and 676–774 (CASP…SMML). A compositionally biased stretch (basic and acidic residues) spans 109 to 120 (PSKRRLSEERRY). Over residues 214 to 224 (AEETETTEQVE) the composition is skewed to acidic residues. Residues 297–318 (GDNQNEPNKATKLQQGKENGNE) are compositionally biased toward polar residues. A compositionally biased stretch (basic and acidic residues) spans 382–398 (KGKEKVDLPAPDKKSAV). A compositionally biased stretch (polar residues) spans 399–409 (EETQGNSTSAF). Composition is skewed to basic and acidic residues over residues 482-495 (NLRD…KELF) and 549-558 (FEKEKEKEPQ). Composition is skewed to polar residues over residues 595–604 (PSVQEQSTLN) and 640–651 (QSMSRSVPTIPT). Low complexity predominate over residues 706–722 (ASSAASTETTATASAKP). The segment covering 743-754 (LAQEEEDEEDVG) has biased composition (acidic residues). Over residues 765–774 (RASRRRSMML) the composition is skewed to basic residues.

The protein belongs to the shugoshin family.

The protein localises to the nucleus. The protein resides in the chromosome. Its subcellular location is the centromere. In terms of biological role, plays a central role in chromosome cohesion during cell division by preventing premature dissociation of cohesin complex from centromeres after prophase, when most of cohesin complex dissociates from chromosomes arms. This is Shugoshin (sgo-1) from Neurospora crassa (strain ATCC 24698 / 74-OR23-1A / CBS 708.71 / DSM 1257 / FGSC 987).